The following is a 1237-amino-acid chain: Zinc finger protein 687 (1237 aa).

Disordered stretches follow at residues 1 to 80 (MGDM…PDIS) and 96 to 330 (EALA…PLKV). The span at 97-111 (ALAGGSAGDGAQAAG) shows a compositional bias: low complexity. A phosphoserine mark is found at S102, S129, and S140. A compositionally biased stretch (pro residues) spans 132–144 (PSLPGTPHSPAPP). At T148 the chain carries Phosphothreonine. 6 positions are modified to phosphoserine: S227, S242, S251, S253, S266, and S271. Positions 234 to 244 (LAQQGSGSSPK) are enriched in polar residues. Residue K285 forms a Glycyl lysine isopeptide (Lys-Gly) (interchain with G-Cter in SUMO2) linkage. The span at 297-310 (SSPGSPQSPSSGAE) shows a compositional bias: low complexity. Residues K336 and K372 each participate in a glycyl lysine isopeptide (Lys-Gly) (interchain with G-Cter in SUMO2) cross-link. Residue S374 is modified to Phosphoserine. Position 377 is a phosphothreonine (T377). Residues K384, K397, and K422 each participate in a glycyl lysine isopeptide (Lys-Gly) (interchain with G-Cter in SUMO2) cross-link. At S433 the chain carries Phosphoserine. Residues K435, K439, K451, and K464 each participate in a glycyl lysine isopeptide (Lys-Gly) (interchain with G-Cter in SUMO2) cross-link. The residue at position 495 (S495) is a Phosphoserine. The C2H2-type 1; degenerate zinc-finger motif lies at 533–552 (YRCLECGDAFSLEKSLARHY). C2H2-type zinc fingers lie at residues 705-727 (NVCP…QRMH), 764-787 (YRCP…QTSH), 792-815 (HKCP…YSQH), 827-849 (YKCA…FDQH), and 858-881 (FKCP…KNTH). Residues 880–890 (THQSGRLEETA) are compositionally biased toward basic and acidic residues. The disordered stretch occupies residues 880-957 (THQSGRLEET…LGSKGLKGGG (78 aa)). T900 is subject to Phosphothreonine. Residues 915–925 (AAPATEESSSS) show a composition bias toward low complexity. Residue K954 forms a Glycyl lysine isopeptide (Lys-Gly) (interchain with G-Cter in SUMO2) linkage. 2 consecutive C2H2-type zinc fingers follow at residues 963–986 (WTCG…KKEH) and 993–1016 (FPCR…RVNH). K1043 is covalently cross-linked (Glycyl lysine isopeptide (Lys-Gly) (interchain with G-Cter in SUMO2)). The tract at residues 1051-1121 (LQLGAQSPGR…LRYRSSSSTE (71 aa)) is disordered. Residue S1057 is modified to Phosphoserine. R1060 carries the post-translational modification Omega-N-methylarginine. A phosphoserine mark is found at S1082, S1083, and S1085. Residue R1101 is modified to Omega-N-methylarginine. A phosphoserine mark is found at S1106 and S1118. The segment at 1135-1158 (QQCLDCGLCFASPGSLSRHRFISH) adopts a C2H2-type 9 zinc-finger fold. The disordered stretch occupies residues 1159 to 1195 (KKRRGVGKASALGLGDGEEEAPPSRSDPDGGDSPLPA). Phosphoserine occurs at positions 1184, 1191, and 1211. The C2H2-type 10 zinc-finger motif lies at 1200–1222 (LTCKVCGKSCDSPLNLKTHFRTH).

It belongs to the krueppel C2H2-type zinc-finger protein family. Interacts with ZMYND8. As to expression, widely expressed with highest levels in obvary, muscle, blood and lung.

Its subcellular location is the cytoplasm. It localises to the nucleus. Functionally, may be involved in transcriptional regulation. The protein is Zinc finger protein 687 (ZNF687) of Homo sapiens (Human).